The chain runs to 313 residues: MEAQIHILEQEAYSAVLRAFQAQADEFSWDKATVMTNLRKELRISDDENRQLLNNVHNDDLIKRIRDSRPRGGNQVVRHQSLDVHPSPTFSASRKKQKTFQSYPSIGSTRSKSFNNRVVSANEPAEALIGRKVWTKWPEDNSFYEAVVTQYNANEGRHALVYDINTVNETWEWVDLNEIPTKDIRWDGEEDGVTLNVGHGGGTTRGNRRTLSHGGRGRGPRTQPRREHLATENGGGRKFFGEIELFNTDSLVKEVERVFDSNLPDPHELDKAKKLLKEHEQALIAAIARLTDASDYESDGEEPYSHELPMLLG.

Positions 1-88 constitute an ENT domain; sequence MEAQIHILEQ…HQSLDVHPSP (88 aa). A coiled-coil region spans residues 35-58; that stretch reads MTNLRKELRISDDENRQLLNNVHN. Disordered regions lie at residues 84 to 106 and 195 to 229; these read VHPSPTFSASRKKQKTFQSYPSI and LNVGHGGGTTRGNRRTLSHGGRGRGPRTQPRREHL. Over residues 206 to 219 the composition is skewed to basic residues; sequence GNRRTLSHGGRGRG. Residues 267-293 are a coiled coil; it reads HELDKAKKLLKEHEQALIAAIARLTDA. Ser294 carries the post-translational modification Phosphoserine. The interval 294–313 is disordered; that stretch reads SDYESDGEEPYSHELPMLLG.

In terms of assembly, interacts with EDM2 in nucleus.

Its subcellular location is the nucleus. Functionally, probably involved in the regulation of chromatin states. Contributes to RPP7-mediated and basal immunity, especially against Hyaloperonospora arabidopsidis isolate Hiks1. Regulates negatively EDM2-dependent floral transition. The sequence is that of Protein EMSY-LIKE 2 from Arabidopsis thaliana (Mouse-ear cress).